The following is a 185-amino-acid chain: Elongation factor P (185 aa).

Belongs to the elongation factor P family.

The protein localises to the cytoplasm. It participates in protein biosynthesis; polypeptide chain elongation. In terms of biological role, involved in peptide bond synthesis. Stimulates efficient translation and peptide-bond synthesis on native or reconstituted 70S ribosomes in vitro. Probably functions indirectly by altering the affinity of the ribosome for aminoacyl-tRNA, thus increasing their reactivity as acceptors for peptidyl transferase. This chain is Elongation factor P, found in Clostridium kluyveri (strain ATCC 8527 / DSM 555 / NBRC 12016 / NCIMB 10680 / K1).